The following is a 212-amino-acid chain: DNA-directed RNA polymerase III subunit RPC8 (212 aa).

Position 162 is a phosphoserine (Ser162). Basic and acidic residues predominate over residues 166–184 (RELEERAQLENEIEGKNEE). Residues 166–194 (RELEERAQLENEIEGKNEETPQNEKPPAY) are disordered.

Belongs to the eukaryotic RPB7/RPC8 RNA polymerase subunit family. Component of the RNA polymerase III (Pol III) complex consisting of 17 subunits. RPC25/RPC8 and RPC17/RPC9 form a Pol III subcomplex.

It is found in the nucleus. Its function is as follows. DNA-dependent RNA polymerase catalyzes the transcription of DNA into RNA using the four ribonucleoside triphosphates as substrates. Specific peripheric component of RNA polymerase III which synthesizes small RNAs, such as 5S rRNA and tRNA. The RPC25/RPC8-RPC17/RPC9 subcomplex may bind Pol III transcripts emerging from the adjacent exit pore during elongation. The protein is DNA-directed RNA polymerase III subunit RPC8 (RPC25) of Saccharomyces cerevisiae (strain ATCC 204508 / S288c) (Baker's yeast).